Here is a 258-residue protein sequence, read N- to C-terminus: tRNA pseudouridine synthase A (258 aa).

The active-site Nucleophile is the D52. Y110 is a substrate binding site.

Belongs to the tRNA pseudouridine synthase TruA family. As to quaternary structure, homodimer.

The enzyme catalyses uridine(38/39/40) in tRNA = pseudouridine(38/39/40) in tRNA. Formation of pseudouridine at positions 38, 39 and 40 in the anticodon stem and loop of transfer RNAs. The sequence is that of tRNA pseudouridine synthase A from Francisella tularensis subsp. tularensis (strain FSC 198).